Reading from the N-terminus, the 458-residue chain is MEGGPEQLHLGKALEEAGGGRALAEIQELALKWFMETQAPSILQNGVLPPWFHGFITRKQTEQLLRDKALGSFLIRLSDRAVGYILSYRGSDRCRHFVINQLRNRRYLVSGDTLSHSTLDELLRHYQEVQLEPFGETLAAACPRLEENDLYDAINTGLQHTNLSLKIPATEFPSMLPDKATSPRLPAKPQVSFLHKKALDMSSRSVSDEVSAEVPTRVPPIPRRSPSLLDESPAGPSDVIYTDLRKINRAQLGLGTEVWGTLRPASAGSLACSPGREPSGKLSDEDQNKPNSLGPAPSGMKPDQGSTMPYTSLGFSLPPSSETLGSQATTWRQGFLKLSHEAQSSSEASSTDTYHLVETPGLQQEARDRPDQRGSPYEQIPTCWHGTAKLSYPGVSPTYSQQSGPMDYGYEKISGTSKLPEPGNTYEQIPAAKNKDTGRVHKPDKFRRLFFTDKKHKF.

Positions 51–142 (WFHGFITRKQ…PFGETLAAAC (92 aa)) constitute an SH2 domain. Disordered regions lie at residues 204-235 (RSVS…SPAG) and 267-326 (AGSL…TLGS). Over residues 278 to 288 (PSGKLSDEDQN) the composition is skewed to basic and acidic residues. Residues 304-326 (QGSTMPYTSLGFSLPPSSETLGS) are compositionally biased toward polar residues.

The protein is SH2 domain-containing protein 7 (Sh2d7) of Mus musculus (Mouse).